The chain runs to 508 residues: Glycerol kinase (508 aa).

Residue Thr-15 coordinates ADP. ATP is bound by residues Thr-15, Ser-16, and Ser-17. Sn-glycerol 3-phosphate is bound at residue Thr-15. Position 19 (Arg-19) interacts with ADP. Sn-glycerol 3-phosphate contacts are provided by Arg-85, Glu-86, Tyr-138, and Asp-251. The glycerol site is built by Arg-85, Glu-86, Tyr-138, Asp-251, and Gln-252. The ADP site is built by Thr-273, Gly-317, and Gly-419. ATP contacts are provided by Thr-273, Gly-317, and Gly-419.

It belongs to the FGGY kinase family.

The enzyme catalyses glycerol + ATP = sn-glycerol 3-phosphate + ADP + H(+). Its pathway is polyol metabolism; glycerol degradation via glycerol kinase pathway; sn-glycerol 3-phosphate from glycerol: step 1/1. With respect to regulation, inhibited by fructose 1,6-bisphosphate (FBP). Its function is as follows. Key enzyme in the regulation of glycerol uptake and metabolism. Catalyzes the phosphorylation of glycerol to yield sn-glycerol 3-phosphate. The polypeptide is Glycerol kinase (Mycoplasma genitalium (strain ATCC 33530 / DSM 19775 / NCTC 10195 / G37) (Mycoplasmoides genitalium)).